Here is a 317-residue protein sequence, read N- to C-terminus: Membrane-associated protein VIPP1, chloroplastic (317 aa).

The stretch at 92–246 (EMNDDLTKMR…SQAEALGQLA (155 aa)) forms a coiled coil. The interval 265–317 (DLAQMKKEISGSSSKGELPPGRTAVSNSGAARPFRDIEIENELNELRKKANEY) is disordered. A compositionally biased stretch (basic and acidic residues) spans 297-317 (PFRDIEIENELNELRKKANEY).

It belongs to the PspA/Vipp/IM30 family. As to quaternary structure, homomultimer. Complex formation involves interaction via the central alpha-helical domain (71-286). (Microbial infection) Interacts with the rice tungro bacilliform virus (RTBV) capsid protein.

It localises to the plastid. The protein localises to the chloroplast inner membrane. It is found in the chloroplast thylakoid membrane. Its function is as follows. Required for plastid vesicle formation and thylakoid membrane biogenesis, but not for functional assembly of thylakoid protein complexes. The sequence is that of Membrane-associated protein VIPP1, chloroplastic from Oryza sativa subsp. japonica (Rice).